The following is a 332-amino-acid chain: Malate dehydrogenase (332 aa).

Residues 16 to 17 (QI), Asp43, and Gly90 each bind NAD(+). Oxaloacetate is bound at residue Arg99. 2 residues coordinate NAD(+): Gln113 and Asn132. Residues Asn132, Arg163, His188, and Ser243 each contribute to the oxaloacetate site. Catalysis depends on His188, which acts as the Proton acceptor.

Belongs to the LDH/MDH superfamily. MDH type 2 family. In terms of assembly, homodimer.

It localises to the cytoplasm. It carries out the reaction (S)-malate + NAD(+) = oxaloacetate + NADH + H(+). Catalyzes the reduction of the carbonyl group of oxalacetic acid. No activity with pulegone. The sequence is that of Malate dehydrogenase (MD1) from Nicotiana tabacum (Common tobacco).